A 467-amino-acid chain; its full sequence is DNA polymerase IV (467 aa).

The region spanning 5–187 (VLHIDMDAFF…LPVGALWGVG (183 aa)) is the UmuC domain. 2 residues coordinate Mg(2+): Asp9 and Asp104. The active site involves Glu105. Disordered stretches follow at residues 364–383 (PDTDYEVGVQSSSSSESTQV) and 429–449 (KGRTKSFSMDDPDLTPADPLD).

This sequence belongs to the DNA polymerase type-Y family. Monomer. It depends on Mg(2+) as a cofactor.

Its subcellular location is the cytoplasm. The catalysed reaction is DNA(n) + a 2'-deoxyribonucleoside 5'-triphosphate = DNA(n+1) + diphosphate. In terms of biological role, poorly processive, error-prone DNA polymerase involved in untargeted mutagenesis. Copies undamaged DNA at stalled replication forks, which arise in vivo from mismatched or misaligned primer ends. These misaligned primers can be extended by PolIV. Exhibits no 3'-5' exonuclease (proofreading) activity. May be involved in translesional synthesis, in conjunction with the beta clamp from PolIII. This is DNA polymerase IV from Corynebacterium glutamicum (strain ATCC 13032 / DSM 20300 / JCM 1318 / BCRC 11384 / CCUG 27702 / LMG 3730 / NBRC 12168 / NCIMB 10025 / NRRL B-2784 / 534).